Here is a 261-residue protein sequence, read N- to C-terminus: Probable pectin methylesterase CGR2 (261 aa).

The Cytoplasmic segment spans residues 1–35 (MARRQVGSTRRVGDGGSFPFAGALHSKSRSSPLLS). Residues 36 to 56 (ICLVLVGACLLIGYAYSGPGI) form a helical membrane-spanning segment. Residues 57–261 (FKSIKEVSKV…CQVFHLKPLH (205 aa)) lie on the Lumenal side of the membrane. The N-linked (GlcNAc...) asparagine glycan is linked to N174.

Belongs to the class I-like SAM-binding methyltransferase superfamily.

It is found in the golgi apparatus membrane. Together with CGR3, required for homogalacturonan pectins (HG) methylesterification in the Golgi apparatus prior to integration into cell walls, essential for general growth and development. Promotes rosette growth. Impacts carbon (C) partitioning, photosynthesis and respiration efficiency by influencing leaf mesophyll cell walls morphology and physiology; pectin methylesterification modulates both expansion and positioning of cells in leaves, probably by changing cell walls plasticity. The polypeptide is Probable pectin methylesterase CGR2 (Arabidopsis thaliana (Mouse-ear cress)).